We begin with the raw amino-acid sequence, 259 residues long: Thiazole synthase (259 aa).

The Schiff-base intermediate with DXP role is filled by lysine 100. Residues glycine 161, 187–188, and 209–210 contribute to the 1-deoxy-D-xylulose 5-phosphate site; these read AG and AS.

Belongs to the ThiG family. As to quaternary structure, homotetramer. Forms heterodimers with either ThiH or ThiS.

The protein resides in the cytoplasm. The enzyme catalyses [ThiS sulfur-carrier protein]-C-terminal-Gly-aminoethanethioate + 2-iminoacetate + 1-deoxy-D-xylulose 5-phosphate = [ThiS sulfur-carrier protein]-C-terminal Gly-Gly + 2-[(2R,5Z)-2-carboxy-4-methylthiazol-5(2H)-ylidene]ethyl phosphate + 2 H2O + H(+). It functions in the pathway cofactor biosynthesis; thiamine diphosphate biosynthesis. Functionally, catalyzes the rearrangement of 1-deoxy-D-xylulose 5-phosphate (DXP) to produce the thiazole phosphate moiety of thiamine. Sulfur is provided by the thiocarboxylate moiety of the carrier protein ThiS. In vitro, sulfur can be provided by H(2)S. This is Thiazole synthase from Salinispora arenicola (strain CNS-205).